We begin with the raw amino-acid sequence, 398 residues long: Endoglucanase (398 aa).

An N-terminal signal peptide occupies residues 1–23 (MSPLKCMALAALGAVMFVGSAQA). Residue E58 is the Proton donor of the active site. The active-site Nucleophile is D119.

This sequence belongs to the glycosyl hydrolase 8 (cellulase D) family.

It localises to the secreted. The catalysed reaction is Endohydrolysis of (1-&gt;4)-beta-D-glucosidic linkages in cellulose, lichenin and cereal beta-D-glucans.. The protein operates within glycan metabolism; bacterial cellulose biosynthesis. Hydrolyzes carboxymethylcellulose. In Pseudomonas fluorescens (strain SBW25), this protein is Endoglucanase (bcsZ).